A 227-amino-acid chain; its full sequence is tRNA (guanine-N(1)-)-methyltransferase (227 aa).

Residues Gly112 and Leu132 to Leu137 each bind S-adenosyl-L-methionine.

The protein belongs to the RNA methyltransferase TrmD family. As to quaternary structure, homodimer.

The protein resides in the cytoplasm. It catalyses the reaction guanosine(37) in tRNA + S-adenosyl-L-methionine = N(1)-methylguanosine(37) in tRNA + S-adenosyl-L-homocysteine + H(+). Specifically methylates guanosine-37 in various tRNAs. The sequence is that of tRNA (guanine-N(1)-)-methyltransferase from Gloeobacter violaceus (strain ATCC 29082 / PCC 7421).